A 372-amino-acid polypeptide reads, in one-letter code: tRNA-specific 2-thiouridylase MnmA (372 aa).

ATP is bound by residues glycine 9–serine 16 and methionine 35. The tract at residues asparagine 95–aspartate 97 is interaction with target base in tRNA. The Nucleophile role is filled by cysteine 100. Cysteine 100 and cysteine 198 form a disulfide bridge. Glycine 124 contributes to the ATP binding site. An interaction with tRNA region spans residues lysine 148 to glutamine 150. Catalysis depends on cysteine 198, which acts as the Cysteine persulfide intermediate. The interval arginine 317–tyrosine 318 is interaction with tRNA.

Belongs to the MnmA/TRMU family.

It is found in the cytoplasm. The enzyme catalyses S-sulfanyl-L-cysteinyl-[protein] + uridine(34) in tRNA + AH2 + ATP = 2-thiouridine(34) in tRNA + L-cysteinyl-[protein] + A + AMP + diphosphate + H(+). Its function is as follows. Catalyzes the 2-thiolation of uridine at the wobble position (U34) of tRNA, leading to the formation of s(2)U34. The protein is tRNA-specific 2-thiouridylase MnmA of Delftia acidovorans (strain DSM 14801 / SPH-1).